Here is an 81-residue protein sequence, read N- to C-terminus: Ferredoxin (81 aa).

The 29-residue stretch at 2-30 (KYTIVDKETCIACGACGAAAPDIYDYDED) folds into the 4Fe-4S ferredoxin-type domain. Cysteine 11, cysteine 14, cysteine 17, and cysteine 61 together coordinate [4Fe-4S] cluster.

The cofactor is [4Fe-4S] cluster.

Functionally, ferredoxins are iron-sulfur proteins that transfer electrons in a wide variety of metabolic reactions. This is Ferredoxin (fer) from Geobacillus stearothermophilus (Bacillus stearothermophilus).